A 485-amino-acid chain; its full sequence is MKNATIVMSVRREQGSSSGEGSLSFEDVAVGFTREEWQFLDQSQKVLYKEVMLENYINLVSIGYRGTKPDSLFKLEQGEPPGIAEGAAHSQICPGFVIQSRRYAGKDSDAFGGYGRSCLHIKRDKTLTGVKYHRCVKPSSPKSQLNDLQKICAGGKPHECSVCGRAFSRKAQLIQHQRTERGEKPHGCGECGKTFMRKIQLTEHQRTHTGEKPHECSECGKAFSRKSQLMVHQRTHTGEKPYRCSKCGKAFSRKCRLNRHQRSHTGEKLYGCSVCGKAFSQKAYLTAHQRLHTGDKPYKCSDCGRTFYFKSDLTRHQRIHTGEKPYECSECEKAFRSKSKLIQHQRTHTGERPYSCRECGKAFAHMSVLIKHEKTHIRETAINSLTVEKPSSRSHTSLYMSELIQEQKTVNTVPIEMPSSGTPPLLNKSERLVGRNVVIVEQPFPRNQAFVVNQEFEQRISLTNEVNVAPSVINYILYLTDIVSE.

Residues 1 to 21 (MKNATIVMSVRREQGSSSGEG) form a disordered region. The KRAB domain maps to 23–94 (LSFEDVAVGF…EGAAHSQICP (72 aa)). Residues 158-180 (HECSVCGRAFSRKAQLIQHQRTE) form a C2H2-type 1; degenerate zinc finger. C2H2-type zinc fingers lie at residues 186 to 208 (HGCG…QRTH), 214 to 236 (HECS…QRTH), 242 to 264 (YRCS…QRSH), 270 to 292 (YGCS…QRLH), 298 to 320 (YKCS…QRIH), 326 to 348 (YECS…QRTH), and 354 to 376 (YSCR…EKTH).

Belongs to the krueppel C2H2-type zinc-finger protein family.

The protein localises to the nucleus. May be involved in transcriptional regulation. The protein is Zinc finger protein 577 (ZNF577) of Homo sapiens (Human).